Here is a 446-residue protein sequence, read N- to C-terminus: uncharacterized protein (446 aa).

Ser393 and Ser397 each carry phosphoserine. The interval 411–431 is disordered; sequence LSSTERRDLDRVRDKQKKQDQ.

This sequence belongs to the IFRD family.

Its subcellular location is the cytoplasm. This is an uncharacterized protein from Schizosaccharomyces pombe (strain 972 / ATCC 24843) (Fission yeast).